The primary structure comprises 234 residues: Leucyl/phenylalanyl-tRNA--protein transferase (234 aa).

This sequence belongs to the L/F-transferase family.

It is found in the cytoplasm. It carries out the reaction N-terminal L-lysyl-[protein] + L-leucyl-tRNA(Leu) = N-terminal L-leucyl-L-lysyl-[protein] + tRNA(Leu) + H(+). The catalysed reaction is N-terminal L-arginyl-[protein] + L-leucyl-tRNA(Leu) = N-terminal L-leucyl-L-arginyl-[protein] + tRNA(Leu) + H(+). It catalyses the reaction L-phenylalanyl-tRNA(Phe) + an N-terminal L-alpha-aminoacyl-[protein] = an N-terminal L-phenylalanyl-L-alpha-aminoacyl-[protein] + tRNA(Phe). Functions in the N-end rule pathway of protein degradation where it conjugates Leu, Phe and, less efficiently, Met from aminoacyl-tRNAs to the N-termini of proteins containing an N-terminal arginine or lysine. In Escherichia coli O81 (strain ED1a), this protein is Leucyl/phenylalanyl-tRNA--protein transferase.